A 331-amino-acid chain; its full sequence is DNA fragmentation factor subunit alpha (331 aa).

At Met1 the chain carries N-acetylmethionine. The 80-residue stretch at 17 to 96 folds into the CIDE-N domain; that stretch reads TLKPCLLRRN…ALASNEKWAY (80 aa). The residue at position 243 (Thr243) is a Phosphothreonine. A disordered region spans residues 305-331; it reads SLRSISASKASPPGDLQNPKRARQDPT. Ser315 bears the Phosphoserine mark.

As to quaternary structure, heterodimer of DFFA and DFFB. In terms of processing, caspase-3 cleaves DFF45 at 2 sites to generate an active factor.

It is found in the cytoplasm. Inhibitor of the caspase-activated DNase (DFF40). In Homo sapiens (Human), this protein is DNA fragmentation factor subunit alpha (DFFA).